Consider the following 121-residue polypeptide: Large ribosomal subunit protein uL22 (121 aa).

Belongs to the universal ribosomal protein uL22 family. Part of the 50S ribosomal subunit.

Its function is as follows. This protein binds specifically to 23S rRNA; its binding is stimulated by other ribosomal proteins, e.g. L4, L17, and L20. It is important during the early stages of 50S assembly. It makes multiple contacts with different domains of the 23S rRNA in the assembled 50S subunit and ribosome. The globular domain of the protein is located near the polypeptide exit tunnel on the outside of the subunit, while an extended beta-hairpin is found that lines the wall of the exit tunnel in the center of the 70S ribosome. The sequence is that of Large ribosomal subunit protein uL22 from Arthrobacter sp. (strain FB24).